The sequence spans 147 residues: Putative protein adenylyltransferase MJ1305 (147 aa).

The GSX(10)DXD motif signature appears at Gly-32–Asp-46. Mg(2+) is bound by residues Asp-44 and Asp-46.

Belongs to the MntA antitoxin family. Mg(2+) serves as cofactor.

The enzyme catalyses L-tyrosyl-[protein] + ATP = O-(5'-adenylyl)-L-tyrosyl-[protein] + diphosphate. It catalyses the reaction O-(5'-adenylyl)-L-tyrosyl-[protein] + ATP = O-[5'-(adenylyl-(5'-&gt;3')-adenylyl)]-L-tyrosyl-[protein] + diphosphate. Putative antitoxin component of a putative type VII toxin-antitoxin (TA) system. Its cognate toxin might be MJ1304, which it might AMPylate. In Methanocaldococcus jannaschii (strain ATCC 43067 / DSM 2661 / JAL-1 / JCM 10045 / NBRC 100440) (Methanococcus jannaschii), this protein is Putative protein adenylyltransferase MJ1305.